A 514-amino-acid polypeptide reads, in one-letter code: Palmitoyltransferase pfa3 (514 aa).

The Cytoplasmic segment spans residues 1-31; sequence MATLAMSTPSSPTWPKRRPKAWAMRCERYCC. A helical membrane pass occupies residues 32–52; the sequence is AAASYFPLAFVYSLTTWAVYV. At 53-64 the chain is on the lumenal side; sequence EASVGLKPSSSS. A helical membrane pass occupies residues 65-85; that stretch reads WIGLPSSILGVVLYLALNISY. At 86 to 174 the chain is on the cytoplasmic side; it reads TTAVFTDPGS…TCVGLRNYKA (89 aa). Residues 130–180 form the DHHC domain; the sequence is RFCKKCQCPKPDRAHHCSTCKRCVLKMDHHCPWLATCVGLRNYKAFLLFLI. Residues 175 to 195 traverse the membrane as a helical segment; it reads FLLFLIYTSLFCWVDFGVSAI. Residues 196–209 are Lumenal-facing; it reads WIWTEVFNDTRYMD. The helical transmembrane segment at 210–230 threads the bilayer; that stretch reads GILPVNVVLLSILGGIIGLVL. Over 231-514 the chain is Cytoplasmic; that stretch reads TGFTAWHISL…SREDDWRDWD (284 aa). 2 disordered regions span residues 307–336 and 436–514; these read VTRPEEGEESSDNLTPAQQALSRSYADLER and GNEL…RDWD. Residues 318–328 show a composition bias toward polar residues; sequence DNLTPAQQALS. The span at 505 to 514 shows a compositional bias: basic and acidic residues; sequence SREDDWRDWD.

The protein belongs to the DHHC palmitoyltransferase family. PFA3 subfamily. Autopalmitoylated.

The protein localises to the vacuole membrane. The catalysed reaction is L-cysteinyl-[protein] + hexadecanoyl-CoA = S-hexadecanoyl-L-cysteinyl-[protein] + CoA. Its function is as follows. Palmitoyltransferase specific for VAC8. Palmitoylates VAC8 at one or more of its N-terminal cysteine residues, which is required for its proper membrane localization. The chain is Palmitoyltransferase pfa3 (pfa3) from Emericella nidulans (strain FGSC A4 / ATCC 38163 / CBS 112.46 / NRRL 194 / M139) (Aspergillus nidulans).